Here is a 128-residue protein sequence, read N- to C-terminus: Fluoride-specific ion channel FluC (128 aa).

4 consecutive transmembrane segments (helical) span residues 3–23 (FSVI…RFLI), 34–54 (LFPV…GFLY), 69–89 (FITG…ETLL), and 100–120 (FLNI…AIIL). Na(+)-binding residues include G75 and T78.

This sequence belongs to the fluoride channel Fluc/FEX (TC 1.A.43) family.

It is found in the cell inner membrane. It catalyses the reaction fluoride(in) = fluoride(out). Na(+) is not transported, but it plays an essential structural role and its presence is essential for fluoride channel function. Fluoride-specific ion channel. Important for reducing fluoride concentration in the cell, thus reducing its toxicity. The polypeptide is Fluoride-specific ion channel FluC (Nitratiruptor sp. (strain SB155-2)).